Consider the following 389-residue polypeptide: Chorismate synthase (389 aa).

NADP(+)-binding residues include Arg-40 and Arg-46. FMN is bound by residues 130-132, 251-252, Gly-297, 312-316, and Arg-338; these read RAS, QA, and KPIST.

Belongs to the chorismate synthase family. In terms of assembly, homotetramer. FMNH2 is required as a cofactor.

The enzyme catalyses 5-O-(1-carboxyvinyl)-3-phosphoshikimate = chorismate + phosphate. It functions in the pathway metabolic intermediate biosynthesis; chorismate biosynthesis; chorismate from D-erythrose 4-phosphate and phosphoenolpyruvate: step 7/7. Catalyzes the anti-1,4-elimination of the C-3 phosphate and the C-6 proR hydrogen from 5-enolpyruvylshikimate-3-phosphate (EPSP) to yield chorismate, which is the branch point compound that serves as the starting substrate for the three terminal pathways of aromatic amino acid biosynthesis. This reaction introduces a second double bond into the aromatic ring system. This chain is Chorismate synthase, found in Solibacter usitatus (strain Ellin6076).